Here is a 405-residue protein sequence, read N- to C-terminus: MISDTVIAILAVALVGSTVQAAPVDATATSTSGIIAVPISKSAAQLAREADPVVSLDWLKKTKAQAQYKHKQANARLHSKRATGASVLTDQGSESLWTGPITIGGQSFTVDWDTGSSDLWVPSSACSSAACNAHHKYTLTSTGKKQSGTFSISYGDGSSASGPVYKDNVVASGLQATSQVFGAVTSESSSFSSDPSDGISGLGWPALAQLSGTSYFWSLINQGTVTSPVFSFRLATTNSELYLGGINSAHYTGAITYTPVTQKAYWTIALGGVSVNGAAINPSVSSAIIDTGTTLVYGPTAGVAALYAKIPGSASMADTYGSDYQGYYTFPCSAVPTVALTFGGSSFSVPTSAFNLGTVSSGSKQCVGGIVGQGDGSWLVGDVFLQGVYSIYDVGNARVGFAKTV.

Positions 1-21 (MISDTVIAILAVALVGSTVQA) are cleaved as a signal peptide. Residues 22–81 (APVDATATSTSGIIAVPISKSAAQLAREADPVVSLDWLKKTKAQAQYKHKQANARLHSKR) constitute a propeptide, removed in mature form. The 306-residue stretch at 97-402 (WTGPITIGGQ…DVGNARVGFA (306 aa)) folds into the Peptidase A1 domain. Asp113 is an active-site residue. Cys126 and Cys131 form a disulfide bridge. The active site involves Asp290. Residues Cys332 and Cys366 are joined by a disulfide bond.

It belongs to the peptidase A1 family.

It is found in the secreted. Inhibited by pepstatin A. Its function is as follows. Possesses acidic protease activity. Hydrolyzes casein and azoalbumin in vitro. This chain is Aspartic protease, found in Phaffia rhodozyma (Yeast).